Reading from the N-terminus, the 248-residue chain is Ribonuclease PH (248 aa).

Phosphate is bound by residues arginine 86 and 124 to 126 (GTR).

The protein belongs to the RNase PH family. In terms of assembly, homohexameric ring arranged as a trimer of dimers.

The catalysed reaction is tRNA(n+1) + phosphate = tRNA(n) + a ribonucleoside 5'-diphosphate. Functionally, phosphorolytic 3'-5' exoribonuclease that plays an important role in tRNA 3'-end maturation. Removes nucleotide residues following the 3'-CCA terminus of tRNAs; can also add nucleotides to the ends of RNA molecules by using nucleoside diphosphates as substrates, but this may not be physiologically important. Probably plays a role in initiation of 16S rRNA degradation (leading to ribosome degradation) during starvation. This chain is Ribonuclease PH, found in Listeria innocua serovar 6a (strain ATCC BAA-680 / CLIP 11262).